Reading from the N-terminus, the 535-residue chain is Peptide chain release factor 3 (535 aa).

Residues 8–276 (ARRRTFAIIS…ALVDLAPQPG (269 aa)) enclose the tr-type G domain. GTP is bound by residues 17 to 24 (SHPDAGKT), 85 to 89 (DTPGH), and 139 to 142 (NKMD).

The protein belongs to the TRAFAC class translation factor GTPase superfamily. Classic translation factor GTPase family. PrfC subfamily.

Its subcellular location is the cytoplasm. In terms of biological role, increases the formation of ribosomal termination complexes and stimulates activities of RF-1 and RF-2. It binds guanine nucleotides and has strong preference for UGA stop codons. It may interact directly with the ribosome. The stimulation of RF-1 and RF-2 is significantly reduced by GTP and GDP, but not by GMP. This Bordetella avium (strain 197N) protein is Peptide chain release factor 3.